A 434-amino-acid chain; its full sequence is Prenyltransferase fogH (434 aa).

Position 86 (E86) interacts with L-tryptophan. Substrate is bound by residues R101, R248, K250, Y252, and Y346.

Belongs to the tryptophan dimethylallyltransferase family.

It functions in the pathway secondary metabolite biosynthesis. In terms of biological role, prenyltransferase; part of the gene cluster that mediates the biosynthesis of flavoglaucin and congeners (including aspergin, dihydroauroglaucin and auroglaucin), prenylated salicylaldehyde derivatives carrying a saturated or an unsaturated C-7 side chain. The PKS fogA releases the carboxylic acid (8E,10E,12E)-3,5,7-trihydroxytetradeca-8,10,12-trienoic acid as its product, as well as derivatives with one and two double bonds. FogA is indeed able to reduce the initial triketide, thus being at least partially responsible for the differently saturated heptyl side chains of flavoglaucin congeners. The oxidoreductases fogB, fogC and fogD modify the nascent polyketide in fogA-bound form and, together, fogA, fogB, fogC and fogD are necessary for the formation of the aromatic core and the cyclized PKS products are released as salicyl alcohols. In particular, fogB is responsible for oxidation of a hydroxyl group or reduction of remaining double bond(s) at the C-7 residue whereas fogD is probably involved in the reductive release of the modified PKS products. The cytochrome P450 monooxygenase fogE is then responsible for the hydroxylation at C-3 of the benzene ring. The fogE products are substrates of the prenyltransferase fogH and the prenylated benzyl alcohols are subsequently oxidized by the fogF to produce the final aryl aldehydes flavoglaucin and congeners. The short-chain dehydrogenase fogG does not seem to be involved in the biosynthesis of the prenylated salicylaldehyde derivatives. This chain is Prenyltransferase fogH, found in Aspergillus ruber (strain CBS 135680).